Here is a 21-residue protein sequence, read N- to C-terminus: Dahlein-5.5 (21 aa).

In terms of tissue distribution, expressed by the skin dorsal glands.

It is found in the secreted. Its function is as follows. Has no antimicrobial activity. Strongly inhibits the formation of NO by neuronal nitric oxide synthase at micromolar concentrations. This is Dahlein-5.5 from Ranoidea dahlii (Dahl's aquatic frog).